A 1513-amino-acid polypeptide reads, in one-letter code: Exo-beta-1,6-galactobiohydrolase (1513 aa).

The first 31 residues, 1-31 (MRVLSKSLAAMVAAATLVGGGAFAVAGTAYA), serve as a signal peptide directing secretion. Residues 666-801 (VADTTSGDSA…PSANQTWTLR (136 aa)) enclose the Ricin B-type lectin domain. F5/8 type C domains follow at residues 965 to 1112 (AIYV…AFVT) and 1116 to 1273 (GAAK…VFAQ). Residues 1456–1480 (VAPGPEEQKPGNTNKPGATGNGNKN) form a disordered region. The segment covering 1465-1480 (PGNTNKPGATGNGNKN) has biased composition (polar residues). A helical membrane pass occupies residues 1489 to 1509 (VAAIAGAVALLAAAAGALFML).

It belongs to the glycosyl hydrolase 30 family.

The protein resides in the cell membrane. It carries out the reaction Hydrolysis of (1-&gt;6)-beta-D-galactosidic linkages in arabinogalactan proteins and (1-&gt;3):(1-&gt;6)-beta-galactans to yield (1-&gt;6)-beta-galactobiose as the final product.. Functionally, involved in the type II arabinogalactan (AG) side chains degradation. Specifically releases the non-reducing terminal beta-1,6-galactobiose (beta-1,6-Gal2) from both dearabinosylated larch AG and polymeric beta-1,6-galactan chains by an exo-mode of action. Shows lower activity with larch AG, and very weak activity with dearabinosylated gum arabic, gum arabic and potato galactan. Can probably release beta-1,6-Gal2 from the internal side chains of type II AG. This chain is Exo-beta-1,6-galactobiohydrolase, found in Bifidobacterium longum subsp. longum (strain ATCC 15707 / DSM 20219 / JCM 1217 / NCTC 11818 / E194b).